Consider the following 178-residue polypeptide: UPF0114 protein HPSH_00970 (178 aa).

4 consecutive transmembrane segments (helical) span residues 15 to 35 (WLLA…GYVF), 54 to 74 (LVLS…VLMV), 102 to 122 (FNAL…IFLL), and 145 to 165 (PIFW…LAAV).

It belongs to the UPF0114 family.

It is found in the cell membrane. This is UPF0114 protein HPSH_00970 from Helicobacter pylori (strain Shi470).